A 227-amino-acid chain; its full sequence is Type II restriction enzyme ScaI (227 aa).

Residues Glu-12 to Gly-35 are disordered.

It catalyses the reaction Endonucleolytic cleavage of DNA to give specific double-stranded fragments with terminal 5'-phosphates.. Functionally, a P subtype restriction enzyme that recognizes the double-stranded sequence 5'-AGTACT-3' and cleaves after T-3. In Streptomyces caespitosus, this protein is Type II restriction enzyme ScaI.